A 295-amino-acid polypeptide reads, in one-letter code: Probable ketoamine kinase slr1563 (295 aa).

ATP is bound at residue 99 to 101; the sequence is EWL. Aspartate 201 serves as the catalytic Proton acceptor.

It belongs to the fructosamine kinase family.

Its function is as follows. Ketoamine kinase that phosphorylates ketoamines on the third carbon of the sugar moiety to generate ketoamine 3-phosphate. The chain is Probable ketoamine kinase slr1563 from Synechocystis sp. (strain ATCC 27184 / PCC 6803 / Kazusa).